Consider the following 92-residue polypeptide: Large ribosomal subunit protein eL43 (92 aa).

Zn(2+) is bound by residues Cys-39, Cys-42, Cys-57, and Cys-60. Residues 39–60 (CPVCGFPKLKRASTSIWVCGKC) form a C4-type zinc finger.

Belongs to the eukaryotic ribosomal protein eL43 family. Putative zinc-binding subfamily. As to quaternary structure, part of the 50S ribosomal subunit. It depends on Zn(2+) as a cofactor.

Functionally, binds to the 23S rRNA. The protein is Large ribosomal subunit protein eL43 of Methanocaldococcus jannaschii (strain ATCC 43067 / DSM 2661 / JAL-1 / JCM 10045 / NBRC 100440) (Methanococcus jannaschii).